The sequence spans 313 residues: Olfactory receptor 2B6 (313 aa).

At 1–27 (MSWANESITGEFVLLGFSDQPWLEFPL) the chain is on the extracellular side. A glycan (N-linked (GlcNAc...) asparagine) is linked at asparagine 5. A helical transmembrane segment spans residues 28-48 (FVVFLTSYIVTIFGNLNIILV). Topologically, residues 49 to 57 (SHLDPKLHT) are cytoplasmic. Residues 58–78 (PMYFFLTNLSVIDLCYITCTV) form a helical membrane-spanning segment. The Extracellular segment spans residues 79-97 (PQMLVNLRSIRKVISFGGC). Cysteine 97 and cysteine 189 are joined by a disulfide. The helical transmembrane segment at 98–118 (VVQLFMFLALGATECVLLPVM) threads the bilayer. Residues 119–143 (SFDRFVAICRPLHYSVIMHQRLCLQ) lie on the Cytoplasmic side of the membrane. A helical membrane pass occupies residues 144-164 (LAAVSWIIGFGNSVWLSILTL). At 165-200 (QLPRCGHYVIDHFLCEVPALLKLSCVDVTANEAELF) the chain is on the extracellular side. Residues 201 to 221 (FVSVFFHLTPLSLILTSYAFI) traverse the membrane as a helical segment. Topologically, residues 222-244 (ARAILKIQSAEGRQKAFGTCSSH) are cytoplasmic. Residues 245 to 265 (LIVVSLFYGTALSVYFLPPSP) form a helical membrane-spanning segment. Residues 266–271 (HSKNRR) lie on the Extracellular side of the membrane. Residues 272–292 (KMVPLFYGIIAPMLNPLIYTL) traverse the membrane as a helical segment. At 293–313 (RNKEVKDAFKRLIKRVFLSKN) the chain is on the cytoplasmic side.

Belongs to the G-protein coupled receptor 1 family.

It is found in the cell membrane. Functionally, odorant receptor. The chain is Olfactory receptor 2B6 from Mus musculus (Mouse).